The sequence spans 117 residues: Anti-sigma F factor antagonist (117 aa).

The STAS domain maps to 3–113; the sequence is LQIEMEHHRG…DNEVNALTEL (111 aa). At serine 58 the chain carries Phosphoserine.

The protein belongs to the anti-sigma-factor antagonist family. In terms of processing, phosphorylated by SpoIIAB on a serine residue.

Its function is as follows. In the phosphorylated form it could act as an anti-anti-sigma factor that counteracts SpoIIAB and thus releases sigma f from inhibition. This Paenibacillus polymyxa (Bacillus polymyxa) protein is Anti-sigma F factor antagonist (spoIIAA).